The following is a 1252-amino-acid chain: ATP-dependent helicase/nuclease subunit A (1252 aa).

In terms of domain architecture, UvrD-like helicase ATP-binding spans 6–489 (TNWTEEQKEA…VLLYKNFRSR (484 aa)). 27-34 (AAAGSGKT) serves as a coordination point for ATP. Residues 523-811 (ANYEEIEENL…RIMSIHKSKG (289 aa)) form the UvrD-like helicase C-terminal domain.

The protein belongs to the helicase family. AddA subfamily. As to quaternary structure, heterodimer of AddA and AddB/RexB. It depends on Mg(2+) as a cofactor.

It carries out the reaction Couples ATP hydrolysis with the unwinding of duplex DNA by translocating in the 3'-5' direction.. The catalysed reaction is ATP + H2O = ADP + phosphate + H(+). Its function is as follows. The heterodimer acts as both an ATP-dependent DNA helicase and an ATP-dependent, dual-direction single-stranded exonuclease. Recognizes the chi site generating a DNA molecule suitable for the initiation of homologous recombination. The AddA nuclease domain is required for chi fragment generation; this subunit has the helicase and 3' -&gt; 5' nuclease activities. This Clostridium acetobutylicum (strain ATCC 824 / DSM 792 / JCM 1419 / IAM 19013 / LMG 5710 / NBRC 13948 / NRRL B-527 / VKM B-1787 / 2291 / W) protein is ATP-dependent helicase/nuclease subunit A.